The primary structure comprises 369 residues: MKIAEIHVYAHDLPVKDGPYTIASSTVWSLQTTLVKIVADSGLAGWGETCPVGPTYAPSHALGARAALAEMAPGLIGANPLQPLVLRRRMDGLLCGHNYAKAAIDIAAYDLMGKHYGVRVADLLGGVAAERVPSYYATGIGQPDEIARIAAEKVAEGFPRLQIKIGGRPVEIDIETVRKVWERIRGTGTRLAVDGNRSLPSRDALRLSRECPEIPFVLEQPCNTLEEIAAIRGRVQHGIYLDESGEDLSTVIRAAGQGLCDGFGMKLTRIGGLQQMAAFRDICEARALPHSCDDAWGGDIIAAACTHIGATVQPRLNEGVWVAQPYIAQPYDEENGIRIAGGHIDLPKGPGLGITPDESLFGPPVASFS.

Positions 56 and 162 each coordinate substrate. Lysine 164 functions as the Proton donor/acceptor in the catalytic mechanism. The Mg(2+) site is built by aspartate 194, glutamate 219, and aspartate 242. Residue lysine 266 is the Proton donor/acceptor of the active site. Residue alanine 295 coordinates substrate.

The protein belongs to the mandelate racemase/muconate lactonizing enzyme family. It depends on Mg(2+) as a cofactor.

The catalysed reaction is trans-4-hydroxy-L-proline betaine = cis-4-hydroxy-D-proline betaine. The enzyme catalyses L-proline betaine = D-proline betaine. Catalyzes the 2-epimerization of trans-4-hydroxy-L-proline betaine (tHyp-B) to cis-4-hydroxy-D-proline betaine (cHyp-B). Is involved in a catabolic pathway that degrades tHyp-B to alpha-ketoglutarate. This pathway would permit the utilization of tHyp-B as a carbon and nitrogen source in the absence of osmotic stress, since tHyp-B functions as an osmolyte and is not catabolized when it is needed as osmoprotectant. Can also catalyze the racemization of L-proline betaine. This Paracoccus denitrificans (strain Pd 1222) protein is 4-hydroxyproline betaine 2-epimerase (hpbD).